A 49-amino-acid chain; its full sequence is uncharacterized protein (49 aa).

The protein belongs to the metallo-dependent hydrolases superfamily. TatD-type hydrolase family. The cofactor is a divalent metal cation.

This is an uncharacterized protein from Geobacillus stearothermophilus (Bacillus stearothermophilus).